Consider the following 731-residue polypeptide: MKLRSSHNASKTLNANNMETLIECQSEGDIKEHPLLASCESEDSICQLIEVKKRKKVLSWPFLMRRLSPASDFSGALETDLKASLFDQPLSIICGDSDTLPRPIQDILTILCLKGPSTEGIFRRAANEKARKELKEELNSGDAVDLERLPVHLLAVVFKDFLRSIPRKLLSSDLFEEWMGALEMQDEEDRIEALKQVADKLPRPNLLLLKHLVYVLHLISKNSEVNRMDSSNLAICIGPNMLTLENDQSLSFEAQKDLNNKVKTLVEFLIDNCFEIFGENIPVHSSITSDDSLEHTDSSDVSTLQNDSAYDSNDPDVESNSSSGISSPSRQPQVPMATAAGLDSAGPQDAREVSPEPIVSTVARLKSSLAQPDRRYSEPSMPSSQECLESRVTNQTLTKSEGDFPVPRVGSRLESEEAEDPFPEEVFPAVQGKTKRPVDLKIKNLAPGSVLPRALVLKAFSSSSLDASSDSSPVASPSSPKRNFFSRHQSFTTKTEKGKPSREIKKHSMSFTFAPHKKVLTKNLSAGSGKSQDFTRDHVPRGVRKESQLAGRIVQENGCETHNQTARGFCLRPHALSVDDVFQGADWERPGSPPSYEEAMQGPAARLVASESQTVGSMTVGSMRARMLEAHCLLPPLPPAHHVEDSRHRGSKEPLPGHGLSPLPERWKQSRTVHASGDSLGHVSGPGRPELLPLRTVSESVQRNKRDCLVRRCSQPVFEADQFQYAKESYI.

One can recognise a Rho-GAP domain in the interval Gln-88–Phe-277. Disordered regions lie at residues Thr-288–Pro-421, Ser-464–His-507, and His-641–Pro-662. Polar residues predominate over residues Ser-299–Asp-311. A compositionally biased stretch (low complexity) spans Ser-319–Ser-329. Over residues Ser-380–Lys-399 the composition is skewed to polar residues. Residue Ser-400 is modified to Phosphoserine. Residues Ser-464–Pro-480 show a composition bias toward low complexity. Basic and acidic residues-rich tracts occupy residues Lys-494–Glu-503 and His-641–Lys-652.

In terms of biological role, may function as a GTPase-activating protein and may play important roles during T-cell activation. In Homo sapiens (Human), this protein is T-cell activation Rho GTPase-activating protein (TAGAP).